A 71-amino-acid chain; its full sequence is Omega-conotoxin SO-3 (71 aa).

Positions 1 to 22 are cleaved as a signal peptide; sequence MKLTCMVIVAVLLLTACQLITA. A propeptide spanning residues 23–45 is cleaved from the precursor; that stretch reads DDSRGTQKHRTLRSKTKLSMSTR. Cystine bridges form between Cys-46–Cys-61, Cys-53–Cys-65, and Cys-60–Cys-70. Cys-70 carries the cysteine amide modification.

Belongs to the conotoxin O1 superfamily. As to expression, expressed by the venom duct.

It localises to the secreted. Its function is as follows. Omega-conotoxins act at presynaptic membranes, they bind and block voltage-gated calcium channels (Cav). This peptide selectively targets Cav2.2/CACNA1B (IC(50)=160 nM) voltage-gated calcium channels. When tested in mammals, this toxin displays an analgesic potency similar to MVIIA in a range of acute and chronic pain models in rodents, but has less adverse effects (tremor, diminution of spontaneous locomotor activity and bad coordinated locomotion) compared with identical dosages of MVIIA injected intrathecally. This is Omega-conotoxin SO-3 from Conus striatus (Striated cone).